Here is a 653-residue protein sequence, read N- to C-terminus: MHAPPTATRRSGPRRTHGIMARLVRLAAGVLVVTLVIGALTALSADDAKTHPHKVCIHDELQQSLLDSVAQQGLAPQRVSRVGLPYVASATAAPAAQVGGVDFALAGDSAPDVTRSAEWGELRITVSAEELTDPAYHCATVGQVISNHIDDYVTCTADDIMTAEKLDILMNYLIPEALQMHKDRLQVQQVQGTWKVARMTSYCGRFKVPEEHFTTGLSNTDFVLYVASVPTSPGVLAWANTCQVFSNDQPAVGVINIPAATITERYDHLMVHAVTHEIAHSLGFSNAFFTNTGIGQFVTGVRGNPDTVPVINSPTVVAKAREHYGCDDVTYVELEDAGGSGTMGSHWKIRNAQDELMAGISGVAYYTSLTLSAFEDLGYYKANYSNAETMKWGKDVGCAFLTGKCVVDNVTQFPSMYCDKDENVYRCHTARLNLGSCEVTDYTFDLPDYLQYFTVPSVGGSADYYDYCPYIVRSPIGSCTQAASSASPFVSAFNTFSMASRCIDGTFTPKSTGGATVTAHLGMCTNVACNTADKTYSIQVYGNGAYIPCTPGATISLDTVSDAFEAGGNITCPPYLEVCQSNVKGAMDYESMTNSGSGSSRPAPVEPSGSGSGSSAATTAPSPTRDGSAAADRIAPRTAAVALLALAVAAACV.

Positions 1-44 are cleaved as a signal peptide; sequence MHAPPTATRRSGPRRTHGIMARLVRLAAGVLVVTLVIGALTALS. Positions 45 to 113 are cleaved as a propeptide — activation peptide; that stretch reads ADDAKTHPHK…ALAGDSAPDV (69 aa). Intrachain disulfides connect Cys-138–Cys-155 and Cys-203–Cys-242. Position 276 (His-276) interacts with Zn(2+). The active site involves Glu-277. Zn(2+)-binding residues include His-280 and His-346. 7 cysteine pairs are disulfide-bonded: Cys-326–Cys-398, Cys-405–Cys-468, Cys-418–Cys-437, Cys-427–Cys-502, Cys-479–Cys-524, Cys-529–Cys-579, and Cys-549–Cys-572. N-linked (GlcNAc...) asparagine glycans are attached at residues Asn-383 and Asn-409. N-linked (GlcNAc...) asparagine glycosylation occurs at Asn-569. The interval 590-631 is disordered; sequence ESMTNSGSGSSRPAPVEPSGSGSGSSAATTAPSPTRDGSAAA. Over residues 591–600 the composition is skewed to polar residues; the sequence is SMTNSGSGSS. Low complexity predominate over residues 607-631; the sequence is PSGSGSGSSAATTAPSPTRDGSAAA. Ser-628 carries GPI-anchor amidated serine lipidation. The propeptide at 629-653 is removed in mature form; that stretch reads AAADRIAPRTAAVALLALAVAAACV.

Belongs to the peptidase M8 family. Zn(2+) serves as cofactor.

It is found in the cell membrane. It carries out the reaction Preference for hydrophobic residues at P1 and P1' and basic residues at P2' and P3'. A model nonapeptide is cleaved at -Ala-Tyr-|-Leu-Lys-Lys-.. Its function is as follows. Plays an integral role during the infection of macrophages in the mammalian host. In Crithidia fasciculata, this protein is Leishmanolysin homolog (gp63).